Here is a 203-residue protein sequence, read N- to C-terminus: MQNAPESVLNALVPMVVEQTAKGERSYDIYSRLLKERVIFLVGQVEEHMANLIVAQLLFLESESPDKDIYLYINSPGGSVTAGMAIYDTMQFIKPNVSTVCIGQAASMGAFLLAGGAEGKRHCLPNSRVMIHQPLGGFQGQASDIAIHAQEILGIKNKLNQMLADHTGQPMEIIERDTDRDNFMSAAEAAEYGLVDSVLSKRG.

Serine 107 serves as the catalytic Nucleophile. Histidine 132 is a catalytic residue.

The protein belongs to the peptidase S14 family. As to quaternary structure, fourteen ClpP subunits assemble into 2 heptameric rings which stack back to back to give a disk-like structure with a central cavity, resembling the structure of eukaryotic proteasomes.

It is found in the cytoplasm. It catalyses the reaction Hydrolysis of proteins to small peptides in the presence of ATP and magnesium. alpha-casein is the usual test substrate. In the absence of ATP, only oligopeptides shorter than five residues are hydrolyzed (such as succinyl-Leu-Tyr-|-NHMec, and Leu-Tyr-Leu-|-Tyr-Trp, in which cleavage of the -Tyr-|-Leu- and -Tyr-|-Trp bonds also occurs).. Cleaves peptides in various proteins in a process that requires ATP hydrolysis. Has a chymotrypsin-like activity. Plays a major role in the degradation of misfolded proteins. This chain is ATP-dependent Clp protease proteolytic subunit, found in Shewanella sediminis (strain HAW-EB3).